The sequence spans 365 residues: Methionine import ATP-binding protein MetN (365 aa).

The ABC transporter domain occupies 26–261 (VRLVDLKRRF…PQSDITKSLL (236 aa)). 58–65 (GRSGAGKS) is an ATP binding site.

This sequence belongs to the ABC transporter superfamily. Methionine importer (TC 3.A.1.24) family. As to quaternary structure, the complex is composed of two ATP-binding proteins (MetN), two transmembrane proteins (MetI) and a solute-binding protein (MetQ).

It is found in the cell inner membrane. It carries out the reaction L-methionine(out) + ATP + H2O = L-methionine(in) + ADP + phosphate + H(+). The enzyme catalyses D-methionine(out) + ATP + H2O = D-methionine(in) + ADP + phosphate + H(+). Its function is as follows. Part of the ABC transporter complex MetNIQ involved in methionine import. Responsible for energy coupling to the transport system. This Mesorhizobium japonicum (strain LMG 29417 / CECT 9101 / MAFF 303099) (Mesorhizobium loti (strain MAFF 303099)) protein is Methionine import ATP-binding protein MetN.